Reading from the N-terminus, the 374-residue chain is Relaxin-3 receptor 2 (374 aa).

At 1-43 (MPTLNTSASPPTFFWANASGGSVLSADDAPMPVKFLALRLMVA) the chain is on the extracellular side. 2 N-linked (GlcNAc...) asparagine glycosylation sites follow: N5 and N17. A helical membrane pass occupies residues 44–64 (LAYGLVGAIGLLGNLAVLWVL). Topologically, residues 65 to 78 (SNCARRAPGPPSDT) are cytoplasmic. A helical transmembrane segment spans residues 79 to 99 (FVFNLALADLGLALTLPFWAA). The Extracellular segment spans residues 100 to 116 (ESALDFHWPFGGALCKM). A disulfide bridge connects residues C114 and C191. A helical transmembrane segment spans residues 117–137 (VLTATVLNVYASIFLITALSV). Residues 138–154 (ARYWVVAMAAGPGTHLS) are Cytoplasmic-facing. Residues 155-175 (LFWARIATLAVWAAAALVTVP) form a helical membrane-spanning segment. Residues 176 to 209 (TAVFGVEGEVCGVRLCLLRFPSRYWLGAYQLQRV) lie on the Extracellular side of the membrane. Residues 210–230 (VLAFMVPLGVITTSYLLLLAF) form a helical membrane-spanning segment. Residues 231–249 (LQRRQRRRQDSRVVARSVR) are Cytoplasmic-facing. The helical transmembrane segment at 250–270 (ILVASFFLCWFPNHVVTLWGV) threads the bilayer. Residues 271-281 (LVKFDLVPWNS) are Extracellular-facing. Residues 282–302 (TFYTIQTYVFPVTTCLAHSNS) form a helical membrane-spanning segment. Topologically, residues 303 to 374 (CLNPVLYCLL…LTNLDRGTPG (72 aa)) are cytoplasmic.

Belongs to the G-protein coupled receptor 1 family. Expressed in a broader range of tissues including brain, kidney, testis, thymus, placenta, prostate, salivary gland, thyroid and colon.

The protein localises to the cell membrane. High affinity receptor for INSL5. Also acts as a receptor for RLN3/relaxin-3, as well as bradykinin and kallidin. Binding of the ligand inhibit cAMP accumulation. The chain is Relaxin-3 receptor 2 (RXFP4) from Homo sapiens (Human).